We begin with the raw amino-acid sequence, 568 residues long: Protein yellow (568 aa).

An N-terminal signal peptide occupies residues 1-28 (MHAQDKGGILPALSLLLIAVAMVSPSQA). N-linked (GlcNAc...) asparagine glycans are attached at residues Asn-151 and Asn-222.

Belongs to the major royal jelly protein family.

The protein localises to the secreted. Functionally, controls the pigmentation pattern of the adult cuticle and larval mouth parts. The polypeptide is Protein yellow (y) (Drosophila subobscura (Fruit fly)).